A 682-amino-acid chain; its full sequence is DNA-directed RNA polymerase subunit beta' (682 aa).

Positions 69, 71, 87, and 90 each coordinate Zn(2+). Residues D489, D491, and D493 each contribute to the Mg(2+) site.

Belongs to the RNA polymerase beta' chain family. RpoC1 subfamily. In plastids the minimal PEP RNA polymerase catalytic core is composed of four subunits: alpha, beta, beta', and beta''. When a (nuclear-encoded) sigma factor is associated with the core the holoenzyme is formed, which can initiate transcription. Mg(2+) is required as a cofactor. It depends on Zn(2+) as a cofactor.

It is found in the plastid. The protein localises to the chloroplast. It carries out the reaction RNA(n) + a ribonucleoside 5'-triphosphate = RNA(n+1) + diphosphate. DNA-dependent RNA polymerase catalyzes the transcription of DNA into RNA using the four ribonucleoside triphosphates as substrates. The chain is DNA-directed RNA polymerase subunit beta' from Hordeum vulgare (Barley).